The sequence spans 230 residues: Homeobox protein Hox-B5 (230 aa).

The segment at 1-135 (GGGGGNVSGS…GAAGTDGQSP (135 aa)) is disordered. The segment covering 49-65 (FPGQESSRFRANQNCPL) has biased composition (polar residues). Positions 87–103 (ATSSAHFTETEETSASS) are enriched in low complexity. The Antp-type hexapeptide motif lies at 137–142 (IFPWMR). A DNA-binding region (homeobox) is located at residues 155–214 (GKRARTAYTRYQTLELEKEFHFNRYLTRRRRIEIAHTLCLSERQIKIWFQNRRMKWKKDN).

This sequence belongs to the Antp homeobox family.

Its subcellular location is the nucleus. In terms of biological role, sequence-specific transcription factor which is part of a developmental regulatory system that provides cells with specific positional identities on the anterior-posterior axis. The sequence is that of Homeobox protein Hox-B5 (hoxb5) from Xenopus laevis (African clawed frog).